A 134-amino-acid polypeptide reads, in one-letter code: UPF0102 protein Adeh_1910 (134 aa).

This sequence belongs to the UPF0102 family.

The polypeptide is UPF0102 protein Adeh_1910 (Anaeromyxobacter dehalogenans (strain 2CP-C)).